A 517-amino-acid chain; its full sequence is GTPase Obg (517 aa).

In terms of domain architecture, Obg spans 2 to 159 (ATFVDTVTLH…GDVVLELKVV (158 aa)). Positions 160-336 (ADVALVGYPS…LSFALAELVK (177 aa)) constitute an OBG-type G domain. GTP is bound by residues 166–173 (GYPSAGKS), 191–195 (FTTLH), 212–215 (DVPG), 288–291 (NKID), and 317–319 (STV). 2 residues coordinate Mg(2+): Ser173 and Thr193. In terms of domain architecture, OCT spans 355-439 (PRAVDEKPFT…GDGVVFDWEP (85 aa)). Residues 490–517 (EGEAGLWADEDGTGQDGTDEDATTDAKA) form a disordered region. Positions 497 to 517 (ADEDGTGQDGTDEDATTDAKA) are enriched in acidic residues.

The protein belongs to the TRAFAC class OBG-HflX-like GTPase superfamily. OBG GTPase family. In terms of assembly, monomer. Requires Mg(2+) as cofactor.

It is found in the cytoplasm. In terms of biological role, an essential GTPase which binds GTP, GDP and possibly (p)ppGpp with moderate affinity, with high nucleotide exchange rates and a fairly low GTP hydrolysis rate. Plays a role in control of the cell cycle, stress response, ribosome biogenesis and in those bacteria that undergo differentiation, in morphogenesis control. The chain is GTPase Obg from Clavibacter sepedonicus (Clavibacter michiganensis subsp. sepedonicus).